A 483-amino-acid chain; its full sequence is Glutamate--tRNA ligase (483 aa).

The 'HIGH' region motif lies at 14 to 24 (PSPTGDPHVGT). Residues 253–257 (KISKR) carry the 'KMSKS' region motif. Position 256 (K256) interacts with ATP.

Belongs to the class-I aminoacyl-tRNA synthetase family. Glutamate--tRNA ligase type 1 subfamily. As to quaternary structure, monomer.

It localises to the cytoplasm. The enzyme catalyses tRNA(Glu) + L-glutamate + ATP = L-glutamyl-tRNA(Glu) + AMP + diphosphate. In terms of biological role, catalyzes the attachment of glutamate to tRNA(Glu) in a two-step reaction: glutamate is first activated by ATP to form Glu-AMP and then transferred to the acceptor end of tRNA(Glu). The polypeptide is Glutamate--tRNA ligase (Deinococcus radiodurans (strain ATCC 13939 / DSM 20539 / JCM 16871 / CCUG 27074 / LMG 4051 / NBRC 15346 / NCIMB 9279 / VKM B-1422 / R1)).